The primary structure comprises 317 residues: OVARIAN TUMOR DOMAIN-containing deubiquitinating enzyme 4 (317 aa).

The 139-residue stretch at 168–306 (YSIIGIPGDG…FGHYDALLLH (139 aa)) folds into the OTU domain. Asp-176 is an active-site residue. Cys-179 serves as the catalytic Nucleophile. His-299 is a catalytic residue.

This sequence belongs to the peptidase C65 family.

It is found in the cytoplasm. The catalysed reaction is Thiol-dependent hydrolysis of ester, thioester, amide, peptide and isopeptide bonds formed by the C-terminal Gly of ubiquitin (a 76-residue protein attached to proteins as an intracellular targeting signal).. Its function is as follows. Hydrolase that can remove conjugated ubiquitin from proteins in vitro and may therefore play an important regulatory role at the level of protein turnover by preventing degradation. Cysteine protease with a preference for 'Lys-63' over 'Lys-48'-linked over 'Met-1' ubiquitin (UB) tetramers (e.g. Ub3 and Ub4) as substrates. Also cleaves RUB-GST fusion. The chain is OVARIAN TUMOR DOMAIN-containing deubiquitinating enzyme 4 from Arabidopsis thaliana (Mouse-ear cress).